The chain runs to 196 residues: Calcineurin B homologous protein 2 (196 aa).

G2 carries N-myristoyl glycine lipidation. EF-hand domains follow at residues 26–61 (ASLL…AVNP), 71–106 (FPDG…PKKP), 111–146 (SRRN…MVGV), and 152–187 (QLEN…MDVE). S27 carries the phosphoserine modification. Positions 124, 126, 128, 130, and 135 each coordinate Ca(2+). The Nuclear export signal motif lies at 137 to 148 (LQVLRLMVGVQV). Residues D165, D167, D169, and E176 each contribute to the Ca(2+) site.

The protein belongs to the calcineurin regulatory subunit family. CHP subfamily. Interacts with PPP3CA. Interacts with SLC9A1/NHE1; the interaction occurs in a calcium-dependent manner. As to expression, expressed in malignantly transformed cells but not detected in normal tissues.

It is found in the nucleus. The protein localises to the cytoplasm. It localises to the cell membrane. In terms of biological role, functions as an integral cofactor in cell pH regulation by controlling plasma membrane-type Na(+)/H(+) exchange activity. Binds to and activates SLC9A1/NHE1 in a serum-independent manner, thus increasing pH and protecting cells from serum deprivation-induced death. Also plays a role in the regulation of cell proliferation and tumor growth by increasing the phosphatase activity of PPP3CA in a calcium-dependent manner. Activator of the calcineurin/NFAT signaling pathway. Involved in the cytoplasmic translocation of the transcription factor NFATC3 to the nucleus. The sequence is that of Calcineurin B homologous protein 2 (CHP2) from Homo sapiens (Human).